The chain runs to 400 residues: MTTLGTPLSPSATRVLLLGSGELGKEVAIELQRFGVEVIAADRYANAPAMQVAHRSHVLDMLDPQALRALIAQEQPHLIVPEIEAIHTETLVALEHEQGQKVIPTARAARLTMDREGIRRLAAETLGLPTSPYRFVDTAAEYREAIATVGLPCVVKPVMSSSGKGQSTLRSEADIDAAWDYAQTGGRAGAGRCIVEGFIDFDYEITLLTVRHAGGTSFCDPIGHWQKDGDYRESWQPQPMSAAALRRSQEIAQAITDELGGWGLFGVELFVKGDEVWFSEVSPRPHDTGLVTLVSQELSEFALHARAILGLPVGAENGGVIRQSGPSASCALLAHGNGVPVFDNVAEALRDPDTALRLFGKPRVDGHRRVGVTLARAGSIDAAREKARVAAAALTIQLRD.

Residues 22 to 23 and E82 contribute to the N(1)-(5-phospho-beta-D-ribosyl)glycinamide site; that span reads EL. ATP contacts are provided by residues R115, K156, 161-166, 196-199, and E204; these read SSGKGQ and EGFI. An ATP-grasp domain is found at 120–309; it reads RLAAETLGLP…EFALHARAIL (190 aa). Mg(2+) contacts are provided by E268 and E280. N(1)-(5-phospho-beta-D-ribosyl)glycinamide is bound by residues D287, K361, and 368-369; that span reads RR.

The protein belongs to the PurK/PurT family. Homodimer.

The enzyme catalyses N(1)-(5-phospho-beta-D-ribosyl)glycinamide + formate + ATP = N(2)-formyl-N(1)-(5-phospho-beta-D-ribosyl)glycinamide + ADP + phosphate + H(+). The protein operates within purine metabolism; IMP biosynthesis via de novo pathway; N(2)-formyl-N(1)-(5-phospho-D-ribosyl)glycinamide from N(1)-(5-phospho-D-ribosyl)glycinamide (formate route): step 1/1. Involved in the de novo purine biosynthesis. Catalyzes the transfer of formate to 5-phospho-ribosyl-glycinamide (GAR), producing 5-phospho-ribosyl-N-formylglycinamide (FGAR). Formate is provided by PurU via hydrolysis of 10-formyl-tetrahydrofolate. This is Formate-dependent phosphoribosylglycinamide formyltransferase from Xanthomonas campestris pv. campestris (strain 8004).